The sequence spans 306 residues: MKEDRVVFIFGPTAVGKSNILFHFPKNKAEIINVDSIQVYKEFNIASSKPSKNLMKHIKHHLVDFLDPEKDYTIGIFYEQALKIVKEIRQKKKIPIFVGGTAFYFKHLKDGFPSTPLVTSKIRIYVNNLLELKGKSYLLKELKNVDPIRFNMLNKNDIYRIKRSLEVYYQTGIPISQFQKKQNSEFKNIVIIGLKRSFEDLKTRISIRINEMLNSGLLSEIKGLFSKGYNENTPAFKGIGYNEFLLWKSRPCYGLNDIIGLINKNSFLYAKRQMTFFAKISDVLWLHPEDDLDNILNLIFKVDKEI.

ATP is bound at residue 11–18; sequence GPTAVGKS. Residue 13–18 coordinates substrate; it reads TAVGKS. The tract at residues 35 to 38 is interaction with substrate tRNA; it reads DSIQ.

The protein belongs to the IPP transferase family. As to quaternary structure, monomer. It depends on Mg(2+) as a cofactor.

The enzyme catalyses adenosine(37) in tRNA + dimethylallyl diphosphate = N(6)-dimethylallyladenosine(37) in tRNA + diphosphate. Functionally, catalyzes the transfer of a dimethylallyl group onto the adenine at position 37 in tRNAs that read codons beginning with uridine, leading to the formation of N6-(dimethylallyl)adenosine (i(6)A). This is tRNA dimethylallyltransferase from Borreliella burgdorferi (strain ZS7) (Borrelia burgdorferi).